We begin with the raw amino-acid sequence, 653 residues long: Glyceraldehyde-3-phosphate:ferredoxin oxidoreductase (653 aa).

Tungstopterin contacts are provided by arginine 70, glycine 89, arginine 196, alanine 197, glycine 199, and arginine 206. Residues cysteine 333 and cysteine 337 each contribute to the [4Fe-4S] cluster site. Tungstopterin is bound by residues aspartate 378, aspartate 383, and aspartate 544. Position 549 (cysteine 549) interacts with [4Fe-4S] cluster.

Belongs to the AOR/FOR family. Monomer. The cofactor is [4Fe-4S] cluster. Tungstopterin is required as a cofactor.

It carries out the reaction D-glyceraldehyde 3-phosphate + 2 oxidized [2Fe-2S]-[ferredoxin] + H2O = (2R)-3-phosphoglycerate + 2 reduced [2Fe-2S]-[ferredoxin] + 3 H(+). With respect to regulation, sensitive to oxygen. Activity increased by 58%-93% in the presence of acetyl phosphate, 3-phosphoglycerate or 2,3-bisphosphoglycerate at 10 mM concentration. Inhibited by up to 25% in the presence of crotonaldehyde or formaldehyde at 10 mM concentration. Inhibited by up to 50% by sodium dithionate. 3.5-fold increase in activity observed by addition of potassium phosphate or sodium arsenate at 200 mM concentration. Activity enhanced by potassium chloride, sodium citrate or sodium sulfate at 200 mM concentration. Its function is as follows. Catalyzes the oxidation of glyceraldehyde-3-phosphate to 3-phosphoglycerate. Uses ferredoxin as electron acceptor. In vitro can also use benzyl viologen, but not NADP or NAD, as electron acceptor. Probably acts as a glycolytic enzyme in place of glyceraldehyde-3-phosphate dehydrogenase (GAPDH) and phosphoglycerate kinase (PGK) in an unusual Emden-Meyerhof glycolysis. The chain is Glyceraldehyde-3-phosphate:ferredoxin oxidoreductase from Pyrococcus furiosus (strain ATCC 43587 / DSM 3638 / JCM 8422 / Vc1).